A 226-amino-acid polypeptide reads, in one-letter code: MKIAVVVFPGSNCDVDLYEALHSVCHADVEYVSHRQKSLAGFDAVMLPGGFSYGDYLRAGAIARFTNIMPAIIKMANEGKPVFGTCNGFQILTEAGLLPGGLKRNDSQRFVCKTVPLEVVNSHTLFTSHYQDHERIALPIAHADGSYYADEKTLDELEANNQVVFRYATENPNGSLHNIAGITNKHGNVLGMMPHPERAVETILGSTDGLRLFESLLENGRIKVEA.

The Glutamine amidotransferase type-1 domain occupies 2–226 (KIAVVVFPGS…LENGRIKVEA (225 aa)). C86 (nucleophile) is an active-site residue. Catalysis depends on residues H195 and E197.

Part of the FGAM synthase complex composed of 1 PurL, 1 PurQ and 2 PurS subunits.

It is found in the cytoplasm. It catalyses the reaction N(2)-formyl-N(1)-(5-phospho-beta-D-ribosyl)glycinamide + L-glutamine + ATP + H2O = 2-formamido-N(1)-(5-O-phospho-beta-D-ribosyl)acetamidine + L-glutamate + ADP + phosphate + H(+). The catalysed reaction is L-glutamine + H2O = L-glutamate + NH4(+). Its pathway is purine metabolism; IMP biosynthesis via de novo pathway; 5-amino-1-(5-phospho-D-ribosyl)imidazole from N(2)-formyl-N(1)-(5-phospho-D-ribosyl)glycinamide: step 1/2. Its function is as follows. Part of the phosphoribosylformylglycinamidine synthase complex involved in the purines biosynthetic pathway. Catalyzes the ATP-dependent conversion of formylglycinamide ribonucleotide (FGAR) and glutamine to yield formylglycinamidine ribonucleotide (FGAM) and glutamate. The FGAM synthase complex is composed of three subunits. PurQ produces an ammonia molecule by converting glutamine to glutamate. PurL transfers the ammonia molecule to FGAR to form FGAM in an ATP-dependent manner. PurS interacts with PurQ and PurL and is thought to assist in the transfer of the ammonia molecule from PurQ to PurL. The protein is Phosphoribosylformylglycinamidine synthase subunit PurQ of Limosilactobacillus reuteri (strain DSM 20016) (Lactobacillus reuteri).